A 79-amino-acid polypeptide reads, in one-letter code: MCGGPNKWYIFLIGLVNINNNNNNNNNNNNNNNNNNNNNNNNNNNNNNNNNNNNNNNNNNNNNNNNNNNNNNKRFFFFG.

Residues 22-72 (NNNNNNNNNNNNNNNNNNNNNNNNNNNNNNNNNNNNNNNNNNNNNNNNNNN) show a composition bias toward low complexity. Positions 22 to 79 (NNNNNNNNNNNNNNNNNNNNNNNNNNNNNNNNNNNNNNNNNNNNNNNNNNNKRFFFFG) are disordered.

This is an uncharacterized protein from Dictyostelium discoideum (Social amoeba).